The primary structure comprises 361 residues: Probable S-adenosylmethionine-dependent methyltransferase At5g38780 (361 aa).

Tyr19, Cys64, Asn69, Asp106, Leu107, Ser135, and Phe136 together coordinate S-adenosyl-L-homocysteine. Asn174, Glu260, Phe262, and Asn263 together coordinate Mg(2+).

This sequence belongs to the methyltransferase superfamily. Type-7 methyltransferase family. Homodimer. Requires Mg(2+) as cofactor.

The protein is Probable S-adenosylmethionine-dependent methyltransferase At5g38780 of Arabidopsis thaliana (Mouse-ear cress).